Consider the following 340-residue polypeptide: Ketol-acid reductoisomerase (NADP(+)) (340 aa).

Residues 2-182 (AELYYDNQAD…GCTRAGVLRT (181 aa)) form the KARI N-terminal Rossmann domain. NADP(+)-binding positions include 25–28 (FGSQ), serine 51, serine 53, and 83–86 (DIGQ). Histidine 108 is an active-site residue. Glycine 134 provides a ligand contact to NADP(+). A KARI C-terminal knotted domain is found at 183–328 (TFAEETETDL…RELRRMMPFV (146 aa)). Mg(2+) contacts are provided by aspartate 191, glutamate 195, glutamate 227, and glutamate 231. Serine 252 contributes to the substrate binding site.

This sequence belongs to the ketol-acid reductoisomerase family. Requires Mg(2+) as cofactor.

It carries out the reaction (2R)-2,3-dihydroxy-3-methylbutanoate + NADP(+) = (2S)-2-acetolactate + NADPH + H(+). The catalysed reaction is (2R,3R)-2,3-dihydroxy-3-methylpentanoate + NADP(+) = (S)-2-ethyl-2-hydroxy-3-oxobutanoate + NADPH + H(+). The protein operates within amino-acid biosynthesis; L-isoleucine biosynthesis; L-isoleucine from 2-oxobutanoate: step 2/4. It participates in amino-acid biosynthesis; L-valine biosynthesis; L-valine from pyruvate: step 2/4. Involved in the biosynthesis of branched-chain amino acids (BCAA). Catalyzes an alkyl-migration followed by a ketol-acid reduction of (S)-2-acetolactate (S2AL) to yield (R)-2,3-dihydroxy-isovalerate. In the isomerase reaction, S2AL is rearranged via a Mg-dependent methyl migration to produce 3-hydroxy-3-methyl-2-ketobutyrate (HMKB). In the reductase reaction, this 2-ketoacid undergoes a metal-dependent reduction by NADPH to yield (R)-2,3-dihydroxy-isovalerate. The protein is Ketol-acid reductoisomerase (NADP(+)) of Chloroflexus aurantiacus (strain ATCC 29366 / DSM 635 / J-10-fl).